Consider the following 217-residue polypeptide: tRNA (guanine-N(7)-)-methyltransferase (217 aa).

Residues Glu48, Glu73, Asn100, and Asp123 each coordinate S-adenosyl-L-methionine. The active site involves Asp123. Residues Lys127 and Asp159 each contribute to the substrate site.

The protein belongs to the class I-like SAM-binding methyltransferase superfamily. TrmB family.

The enzyme catalyses guanosine(46) in tRNA + S-adenosyl-L-methionine = N(7)-methylguanosine(46) in tRNA + S-adenosyl-L-homocysteine. It participates in tRNA modification; N(7)-methylguanine-tRNA biosynthesis. Functionally, catalyzes the formation of N(7)-methylguanine at position 46 (m7G46) in tRNA. This is tRNA (guanine-N(7)-)-methyltransferase from Leptospira interrogans serogroup Icterohaemorrhagiae serovar Lai (strain 56601).